Reading from the N-terminus, the 1284-residue chain is Neurexin-4 (1284 aa).

The first 35 residues, 1–35 (MRPPRSNTKAAFSSLQFGLLCLLLLVNNGIKSVQA), serve as a signal peptide directing secretion. At 36 to 1217 (DAFTDYFSDY…LRKAYNEVDS (1182 aa)) the chain is on the extracellular side. One can recognise an F5/8 type C domain in the interval 47–185 (CNQPLMERAV…ISMRVELYGC (139 aa)). A disulfide bridge connects residues C47 and C185. Residues N195, N329, N340, and N398 are each glycosylated (N-linked (GlcNAc...) asparagine). The region spanning 220-369 (FKTAFANGVM…FTRVNTIYAC (150 aa)) is the Laminin G-like 1 domain. A disulfide bridge connects residues C333 and C369. Positions 403-540 (FRTYEETGVM…CGDDVVVDAC (138 aa)) constitute a Laminin G-like 2 domain. 4 disulfides stabilise this stretch: C507–C540, C546–C557, C551–C566, and C568–C578. The EGF-like 1 domain occupies 542–579 (MIDRCNPNPCQHKGLCHQNSREFFCDCGHTGYAGAVCH). An N-linked (GlcNAc...) asparagine glycan is attached at N668. Positions 824-962 (FRTTQENSVI…RGLYGISTGC (139 aa)) constitute a Laminin G-like 3 domain. Disulfide bonds link C934/C962, C966/C977, C971/C986, and C988/C998. The region spanning 962–999 (CVGRCESNPCLNNGTCIERYDGYSCDCRWSAFKGPICA) is the EGF-like 2 domain. A glycan (N-linked (GlcNAc...) asparagine) is linked at N974. Positions 1032–1183 (FTTTIPKGFL…LGTQLTEDFC (152 aa)) constitute a Laminin G-like 4 domain. N1047 and N1137 each carry an N-linked (GlcNAc...) asparagine glycan. Residues C1147 and C1183 are joined by a disulfide bond. A helical transmembrane segment spans residues 1218 to 1238 (VLLACLLVILFLLLILMFFLI). Topologically, residues 1239-1284 (GRYLHRHKGDYLTHEDQGADGADDPDDAVLHSTTGHQVRKRTEIFI) are cytoplasmic.

It belongs to the neurexin family. As to quaternary structure, forms a complex with Nrg and Cont. Forms a complex composed of septa junction proteins Nrx-IV/Nrx, Tsf2/MTf, Cont and Nrg during late embryogenesis. The C-terminal region interacts with coracle. Interacts with Patj in cis form. As to expression, found in septate junctions of epithelial and glial cells.

The protein resides in the cell membrane. The protein localises to the cell junction. It is found in the septate junction. Functionally, seems to play a role in the formation and function of septate junctions. Septate junctions, which are the equivalent of vertebrates tight junctions, are characterized by regular arrays of transverse structures that span the intermembrane space and form a physical barrier to diffusion. Required for the blood-brain barrier formation. The sequence is that of Neurexin-4 (Nrx-IV) from Drosophila melanogaster (Fruit fly).